The following is a 1237-amino-acid chain: ATP-dependent RNA helicase DEAH13 (1237 aa).

2 disordered regions span residues 1 to 51 (MASV…NSNV) and 115 to 148 (AMQL…EPTT). The segment covering 24-38 (SNKMQDKLNSNNNTG) has biased composition (polar residues). The span at 131-143 (SVEQNDNDDDSCM) shows a compositional bias: acidic residues. Positions 251 to 443 (MEAINRHPAV…KRLFPNIPPL (193 aa)) constitute a Helicase ATP-binding domain. 264–271 (GQTGCGKT) contributes to the ATP binding site. Residues 367 to 370 (DEAH) carry the DEAH box motif. A disordered region spans residues 543 to 585 (DDDSNNQNSRFSSHGEDPSDIGDGNYDDDFEEEDMYESDEDRD). The segment covering 567–585 (NYDDDFEEEDMYESDEDRD) has biased composition (acidic residues). The Helicase C-terminal domain maps to 605–776 (ALRAAFNALA…GVILLMKSMN (172 aa)). Positions 876-910 (EKKNESKDADKTVKQEDKQRKKDRKEKIKAARDRF) are disordered.

Belongs to the DEAD box helicase family. DEAH subfamily.

It catalyses the reaction ATP + H2O = ADP + phosphate + H(+). In Arabidopsis thaliana (Mouse-ear cress), this protein is ATP-dependent RNA helicase DEAH13.